We begin with the raw amino-acid sequence, 192 residues long: uncharacterized protein (192 aa).

The 132-residue stretch at 29 to 160 (QRQAAVLVPI…PLDIHRRGND (132 aa)) folds into the Nudix hydrolase domain. Positions 67–89 (GAVDNTDATLIAAALREAQEEVA) match the Nudix box motif. Mg(2+)-binding residues include glutamate 83 and glutamate 87.

The protein belongs to the Nudix hydrolase family. PCD1 subfamily. Requires Mn(2+) as cofactor. The cofactor is Mg(2+).

Probably mediates the hydrolysis of some nucleoside diphosphate derivatives. This is an uncharacterized protein from Klebsiella pneumoniae subsp. pneumoniae (strain ATCC 700721 / MGH 78578).